Consider the following 702-residue polypeptide: Polyribonucleotide nucleotidyltransferase (702 aa).

Aspartate 485 and aspartate 491 together coordinate Mg(2+). A KH domain is found at 552–612; that stretch reads PRTEIICIDP…EGVKKAISII (61 aa). Residues 622–690 form the S1 motif domain; the sequence is GEIYLGKVTK…NQGRINLSRK (69 aa).

It belongs to the polyribonucleotide nucleotidyltransferase family. Mg(2+) serves as cofactor.

The protein localises to the cytoplasm. The catalysed reaction is RNA(n+1) + phosphate = RNA(n) + a ribonucleoside 5'-diphosphate. Involved in mRNA degradation. Catalyzes the phosphorolysis of single-stranded polyribonucleotides processively in the 3'- to 5'-direction. The protein is Polyribonucleotide nucleotidyltransferase of Clostridium botulinum (strain 657 / Type Ba4).